The primary structure comprises 280 residues: Alpha-aminoadipate--LysW ligase LysX (280 aa).

ATP contacts are provided by residues lysine 89, lysine 129, 133–139 (GSWGRLL), 169–180 (QEYVEKPGRDIR), arginine 194, and asparagine 202. Residues 93–276 (SVALAKAGLP…IPGEILKYAW (184 aa)) form the ATP-grasp domain. Aspartate 237, glutamate 249, and asparagine 251 together coordinate Mg(2+). Positions 258 to 259 (NS) match the N-[TS] motif that is essential for LysX substrate specificity motif.

It belongs to the RimK family. LysX subfamily. In terms of assembly, homodimer. Requires Mg(2+) as cofactor.

The enzyme catalyses [amino-group carrier protein]-C-terminal-L-glutamate + L-2-aminoadipate + ATP = [amino-group carrier protein]-C-terminal-N-(1,4-dicarboxybutan-1-yl)-L-glutamine + ADP + phosphate + H(+). Its pathway is amino-acid biosynthesis; L-lysine biosynthesis via AAA pathway; L-lysine from L-alpha-aminoadipate (Thermus route): step 1/5. Its function is as follows. Catalyzes the ATP-dependent formation of a covalent bond between the amino group of alpha-aminoadipate (AAA) and the gamma-carboxyl group of the C-terminal glutamate residue in LysW. This is Alpha-aminoadipate--LysW ligase LysX (lysX) from Thermus thermophilus (strain ATCC 27634 / DSM 579 / HB8).